We begin with the raw amino-acid sequence, 187 residues long: MIDTKQLIKAGEEKMTFAIEYLDEQLSHIRAGKANPKILDCVKVMYYGAPVPLTNVATVTVPDARTIMITPWEKKIIRDIEKGILDSELGITPENNGEVIRLGIPPLTEERRRQLVKQCKQEAENAKISVRNARRDAIEALKKSIKSDGVPEDVEKDAEAEVQKIHDKFIKKIDELYAAKEKEVMTV.

Belongs to the RRF family.

Its subcellular location is the cytoplasm. Responsible for the release of ribosomes from messenger RNA at the termination of protein biosynthesis. May increase the efficiency of translation by recycling ribosomes from one round of translation to another. This Parabacteroides distasonis (strain ATCC 8503 / DSM 20701 / CIP 104284 / JCM 5825 / NCTC 11152) protein is Ribosome-recycling factor.